The chain runs to 149 residues: MTSFKLVKYIPRIKKKKSGLRKLARKVPTDRLLKFERVFKAQKRIPMSVFKAQRVLDEIRWRYYEETVMILNLMPYRASYPILKLVYSAAANATHYRDFDKANLFITKAEVSRSTIMKKFRPRARGRSFPIKKSMCHITIVLNIVKKSK.

It belongs to the universal ribosomal protein uL22 family. Part of the 50S ribosomal subunit.

Its subcellular location is the plastid. The protein localises to the chloroplast. Its function is as follows. This protein binds specifically to 23S rRNA. In terms of biological role, the globular domain of the protein is located near the polypeptide exit tunnel on the outside of the subunit, while an extended beta-hairpin is found that lines the wall of the exit tunnel in the center of the 70S ribosome. This Hordeum vulgare (Barley) protein is Large ribosomal subunit protein uL22c (rpl22).